A 276-amino-acid polypeptide reads, in one-letter code: Bis(5'-nucleosyl)-tetraphosphatase, symmetrical (276 aa).

It belongs to the Ap4A hydrolase family.

The catalysed reaction is P(1),P(4)-bis(5'-adenosyl) tetraphosphate + H2O = 2 ADP + 2 H(+). Its function is as follows. Hydrolyzes diadenosine 5',5'''-P1,P4-tetraphosphate to yield ADP. The sequence is that of Bis(5'-nucleosyl)-tetraphosphatase, symmetrical from Dechloromonas aromatica (strain RCB).